The chain runs to 206 residues: MTRETSMPKHDKNKSAIPSKMADRIEHAILDSRRIFISDAVDSGSASEIIRKLWYLELTDPGKPILFVINSPGGAVDSGFAIWDQIKMITSPVTTLVTGLAASMGSILSLCASPGRRFATPHSRIMIHQPLLSGVIKGQATDLEIQAKEMLKTRNGLIEIYVQATGKNFAAIEKAIDRDTWMTAQEALEFGLLDKVINSFEEIEST.

The Nucleophile role is filled by Ser-103. Residue His-128 is part of the active site.

This sequence belongs to the peptidase S14 family. In terms of assembly, fourteen ClpP subunits assemble into 2 heptameric rings which stack back to back to give a disk-like structure with a central cavity, resembling the structure of eukaryotic proteasomes.

Its subcellular location is the cytoplasm. It catalyses the reaction Hydrolysis of proteins to small peptides in the presence of ATP and magnesium. alpha-casein is the usual test substrate. In the absence of ATP, only oligopeptides shorter than five residues are hydrolyzed (such as succinyl-Leu-Tyr-|-NHMec, and Leu-Tyr-Leu-|-Tyr-Trp, in which cleavage of the -Tyr-|-Leu- and -Tyr-|-Trp bonds also occurs).. In terms of biological role, cleaves peptides in various proteins in a process that requires ATP hydrolysis. Has a chymotrypsin-like activity. Plays a major role in the degradation of misfolded proteins. The protein is ATP-dependent Clp protease proteolytic subunit 1 of Protochlamydia amoebophila (strain UWE25).